A 137-amino-acid polypeptide reads, in one-letter code: Universal stress protein HP_0031 (137 aa).

Belongs to the universal stress protein A family.

This is Universal stress protein HP_0031 from Helicobacter pylori (strain ATCC 700392 / 26695) (Campylobacter pylori).